The chain runs to 179 residues: UPF0227 protein Shewana3_2292 (179 aa).

The protein belongs to the UPF0227 family.

This chain is UPF0227 protein Shewana3_2292, found in Shewanella sp. (strain ANA-3).